A 369-amino-acid polypeptide reads, in one-letter code: Phenylalanine--tRNA ligase alpha subunit (369 aa).

A Mg(2+)-binding site is contributed by glutamate 269.

Belongs to the class-II aminoacyl-tRNA synthetase family. Phe-tRNA synthetase alpha subunit type 1 subfamily. As to quaternary structure, tetramer of two alpha and two beta subunits. Mg(2+) is required as a cofactor.

Its subcellular location is the cytoplasm. It catalyses the reaction tRNA(Phe) + L-phenylalanine + ATP = L-phenylalanyl-tRNA(Phe) + AMP + diphosphate + H(+). This Brucella abortus (strain 2308) protein is Phenylalanine--tRNA ligase alpha subunit.